The sequence spans 337 residues: Phenylalanine--tRNA ligase alpha subunit (337 aa).

Glu-258 is a Mg(2+) binding site.

It belongs to the class-II aminoacyl-tRNA synthetase family. Phe-tRNA synthetase alpha subunit type 1 subfamily. In terms of assembly, tetramer of two alpha and two beta subunits. Mg(2+) serves as cofactor.

Its subcellular location is the cytoplasm. It carries out the reaction tRNA(Phe) + L-phenylalanine + ATP = L-phenylalanyl-tRNA(Phe) + AMP + diphosphate + H(+). This Burkholderia cenocepacia (strain ATCC BAA-245 / DSM 16553 / LMG 16656 / NCTC 13227 / J2315 / CF5610) (Burkholderia cepacia (strain J2315)) protein is Phenylalanine--tRNA ligase alpha subunit.